A 103-amino-acid chain; its full sequence is Small ribosomal subunit protein uS10 (103 aa).

Belongs to the universal ribosomal protein uS10 family. As to quaternary structure, part of the 30S ribosomal subunit.

In terms of biological role, involved in the binding of tRNA to the ribosomes. The protein is Small ribosomal subunit protein uS10 of Magnetococcus marinus (strain ATCC BAA-1437 / JCM 17883 / MC-1).